The sequence spans 455 residues: Major facilitator superfamily domain-containing protein 10 (455 aa).

11 consecutive transmembrane segments (helical) span residues 27 to 47, 86 to 106, 113 to 135, 148 to 168, 176 to 196, 202 to 222, 275 to 295, 310 to 327, 336 to 356, 359 to 379, and 421 to 441; these read VVFL…PLLP, VLFG…CAPL, CLGR…AVWA, LIGG…ADLG, GMAV…MLGA, MAPW…FCFL, LGLV…TLSF, KMFF…GAYA, VAAV…IGWG, LPVL…VVPC, and LAGA…PFFL.

Belongs to the major facilitator superfamily. Expressed in luminal membrane of renal tubules (at protein level). Detected in all tissues tested with higher expression in heart, splee, kidney, leukocytes and prostate.

It localises to the nucleus inner membrane. The protein localises to the cell membrane. Probable organic anion transporter which may serve as a transporter for some non-steroidal anti-inflammatory drugs (NSAIDs) as well as other organic anions across the luminal membranes of renal proximal tubules at the final excretion step into the urine. In Homo sapiens (Human), this protein is Major facilitator superfamily domain-containing protein 10 (MFSD10).